Consider the following 649-residue polypeptide: Acetyl-coenzyme A synthetase (649 aa).

CoA-binding positions include 191-194 (RAGR), T311, and N335. Residues 387–389 (GEP), 411–416 (DTWWQT), D500, and R515 each bind ATP. Residue S523 participates in CoA binding. An ATP-binding site is contributed by R526. The Mg(2+) site is built by V537, F539, and I542. R584 contacts CoA. At K609 the chain carries N6-acetyllysine.

It belongs to the ATP-dependent AMP-binding enzyme family. Requires Mg(2+) as cofactor. Acetylated. Deacetylation by the SIR2-homolog deacetylase activates the enzyme.

The enzyme catalyses acetate + ATP + CoA = acetyl-CoA + AMP + diphosphate. Catalyzes the conversion of acetate into acetyl-CoA (AcCoA), an essential intermediate at the junction of anabolic and catabolic pathways. AcsA undergoes a two-step reaction. In the first half reaction, AcsA combines acetate with ATP to form acetyl-adenylate (AcAMP) intermediate. In the second half reaction, it can then transfer the acetyl group from AcAMP to the sulfhydryl group of CoA, forming the product AcCoA. The polypeptide is Acetyl-coenzyme A synthetase (Photobacterium profundum (strain SS9)).